An 801-amino-acid chain; its full sequence is Transferrin receptor protein 2 (801 aa).

The Cytoplasmic portion of the chain corresponds to 1–83 (MERLWGLFQR…WAAAGRRAAP (83 aa)). Residues 16-45 (PRSSQTVYQRVEGPRKGHLEEEEEDGEEGA) are disordered. The Endocytosis signal motif lies at 23 to 26 (YQRV). The span at 35-45 (EEEEEDGEEGA) shows a compositional bias: acidic residues. The helical; Signal-anchor for type II membrane protein transmembrane segment at 84–104 (YLVLTALLIFTGAFLLGYVAF) threads the bilayer. The Extracellular portion of the chain corresponds to 105–801 (RGSCQACGDS…GDVWNIDNNF (697 aa)). N-linked (GlcNAc...) asparagine glycans are attached at residues asparagine 240, asparagine 339, asparagine 540, and asparagine 754.

The protein belongs to the peptidase M28 family. M28B subfamily. As to quaternary structure, homodimer. Predominantly expressed in liver. While the alpha form is also expressed in spleen, lung, muscle, prostate and peripheral blood mononuclear cells, the beta form is expressed in all tissues tested, albeit weakly.

It is found in the cell membrane. It localises to the cytoplasm. Its function is as follows. Mediates cellular uptake of transferrin-bound iron in a non-iron dependent manner. May be involved in iron metabolism, hepatocyte function and erythrocyte differentiation. The protein is Transferrin receptor protein 2 (TFR2) of Homo sapiens (Human).